The chain runs to 108 residues: Ig kappa chain V region 120 (108 aa).

The tract at residues 1–23 (AFELTQTPSSVEAAVGGTVTIKC) is framework-1. A complementarity-determining-1 region spans residues 24–34 (QSSQSIGTYLA). The interval 35–49 (WYZZKPGQPPKLLIY) is framework-2. A complementarity-determining-2 region spans residues 50 to 56 (RASTLAS). Residues 57-88 (GVSSRFKGSGSGTEFTLTISGVECADAATYYC) are framework-3. Residues 89 to 97 (QGTYYZSAS) are complementarity-determining-3. Residues 98 to 107 (FGGGTEVVVK) are framework-4.

This Oryctolagus cuniculus (Rabbit) protein is Ig kappa chain V region 120.